We begin with the raw amino-acid sequence, 369 residues long: Queuine tRNA-ribosyltransferase (369 aa).

Asp89 (proton acceptor) is an active-site residue. Substrate-binding positions include 89-93 (DSGGF), Asp142, Gln184, and Gly211. Residues 242 to 248 (GGGSPEL) are RNA binding. The active-site Nucleophile is Asp261. Residues 266–270 (TRIAR) form an RNA binding; important for wobble base 34 recognition region. 4 residues coordinate Zn(2+): Cys299, Cys301, Cys304, and His330.

This sequence belongs to the queuine tRNA-ribosyltransferase family. As to quaternary structure, homodimer. Within each dimer, one monomer is responsible for RNA recognition and catalysis, while the other monomer binds to the replacement base PreQ1. It depends on Zn(2+) as a cofactor.

The catalysed reaction is 7-aminomethyl-7-carbaguanine + guanosine(34) in tRNA = 7-aminomethyl-7-carbaguanosine(34) in tRNA + guanine. It participates in tRNA modification; tRNA-queuosine biosynthesis. In terms of biological role, catalyzes the base-exchange of a guanine (G) residue with the queuine precursor 7-aminomethyl-7-deazaguanine (PreQ1) at position 34 (anticodon wobble position) in tRNAs with GU(N) anticodons (tRNA-Asp, -Asn, -His and -Tyr). Catalysis occurs through a double-displacement mechanism. The nucleophile active site attacks the C1' of nucleotide 34 to detach the guanine base from the RNA, forming a covalent enzyme-RNA intermediate. The proton acceptor active site deprotonates the incoming PreQ1, allowing a nucleophilic attack on the C1' of the ribose to form the product. After dissociation, two additional enzymatic reactions on the tRNA convert PreQ1 to queuine (Q), resulting in the hypermodified nucleoside queuosine (7-(((4,5-cis-dihydroxy-2-cyclopenten-1-yl)amino)methyl)-7-deazaguanosine). The polypeptide is Queuine tRNA-ribosyltransferase (Thermotoga sp. (strain RQ2)).